A 305-amino-acid chain; its full sequence is MLSITEEIKNKGRDIGFHKIGIANPHIAYQDNAVSNLQGWLSSGYQADMTWMDNPKRFDITQCMPDIQSVITVALNYYTPHQHSSNSRYGKVSRYAWGKDYHKVLSQKLKLFCKWLNNRGIKTTCYVDTGPIQEKVWAERSGVGWIAKNGNVITKEFGSWVFLGVVLTNLSLTSDTPHAKYCGTCRKCLDICPTKAIVHPFVVDSRRCIAYNTIENRSNDFPEYIKNNLNGWIAGCDLCQDVCPWNKRFSKETNIQDFYPQPGNISLDLKEISNLTEIQWQQKFSSSSLKRIKVKAWRRNAKANL.

Asp-128 serves as the catalytic Proton donor. The 4Fe-4S ferredoxin-type domain occupies 170 to 202 (LSLTSDTPHAKYCGTCRKCLDICPTKAIVHPFV). Residues Cys-182, Cys-185, Cys-188, Cys-192, Cys-208, Cys-236, Cys-239, and Cys-243 each contribute to the [4Fe-4S] cluster site.

The protein belongs to the QueG family. Monomer. Cob(II)alamin serves as cofactor. Requires [4Fe-4S] cluster as cofactor.

It is found in the cytoplasm. It carries out the reaction epoxyqueuosine(34) in tRNA + AH2 = queuosine(34) in tRNA + A + H2O. It participates in tRNA modification; tRNA-queuosine biosynthesis. Catalyzes the conversion of epoxyqueuosine (oQ) to queuosine (Q), which is a hypermodified base found in the wobble positions of tRNA(Asp), tRNA(Asn), tRNA(His) and tRNA(Tyr). This chain is Epoxyqueuosine reductase, found in Atelocyanobacterium thalassa (isolate ALOHA).